The chain runs to 92 residues: Large ribosomal subunit protein bL25 (92 aa).

This sequence belongs to the bacterial ribosomal protein bL25 family. Part of the 50S ribosomal subunit; part of the 5S rRNA/L5/L18/L25 subcomplex. Contacts the 5S rRNA. Binds to the 5S rRNA independently of L5 and L18.

Functionally, this is one of the proteins that binds to the 5S RNA in the ribosome where it forms part of the central protuberance. The polypeptide is Large ribosomal subunit protein bL25 (Vibrio parahaemolyticus serotype O3:K6 (strain RIMD 2210633)).